The primary structure comprises 759 residues: Catalase-peroxidase (759 aa).

The tract at residues 1–24 (MTQDKCPFKEQPSQPNFAGGGTSN) is disordered. A cross-link (tryptophyl-tyrosyl-methioninium (Trp-Tyr) (with M-268)) is located at residues 96 to 242 (WHSAGTYRVF…LAAAHMGLIY (147 aa)). The active-site Proton acceptor is histidine 97. The segment at residues 242-268 (YVNPEGPDGNPDPIAAAHDIRDTFGRM) is a cross-link (tryptophyl-tyrosyl-methioninium (Tyr-Met) (with W-96)). Histidine 283 contributes to the heme b binding site.

Belongs to the peroxidase family. Peroxidase/catalase subfamily. As to quaternary structure, homodimer or homotetramer. Heme b serves as cofactor. Post-translationally, formation of the three residue Trp-Tyr-Met cross-link is important for the catalase, but not the peroxidase activity of the enzyme.

It localises to the cytoplasm. It carries out the reaction H2O2 + AH2 = A + 2 H2O. The catalysed reaction is 2 H2O2 = O2 + 2 H2O. Bifunctional enzyme with both catalase and broad-spectrum peroxidase activity. The chain is Catalase-peroxidase from Neosartorya fischeri (strain ATCC 1020 / DSM 3700 / CBS 544.65 / FGSC A1164 / JCM 1740 / NRRL 181 / WB 181) (Aspergillus fischerianus).